The following is a 61-amino-acid chain: Small ribosomal subunit protein uS14 (61 aa).

Zn(2+)-binding residues include Cys-24, Cys-27, Cys-40, and Cys-43.

It belongs to the universal ribosomal protein uS14 family. Zinc-binding uS14 subfamily. Part of the 30S ribosomal subunit. Contacts proteins S3 and S10. The cofactor is Zn(2+).

In terms of biological role, binds 16S rRNA, required for the assembly of 30S particles and may also be responsible for determining the conformation of the 16S rRNA at the A site. The chain is Small ribosomal subunit protein uS14 from Malacoplasma penetrans (strain HF-2) (Mycoplasma penetrans).